The primary structure comprises 154 residues: Secreted RxLR effector protein PITG_21681 (154 aa).

Positions 1–20 (MRRYAALMVIDAVLLSTSQA) are cleaved as a signal peptide. Residues 42 to 70 (SAERDGGIPNKRSLRRISVTESNDGERDE) form a disordered region. The RxLR-dEER motif lies at 53–72 (RSLRRISVTESNDGERDEER).

The protein belongs to the RxLR effector family.

It localises to the secreted. Its subcellular location is the host cell. In terms of biological role, secreted effector that is involved in host plant infection. Increases the susceptibility to P.infestans and reduces the plant growth. Affects the expression of host genes. The sequence is that of Secreted RxLR effector protein PITG_21681 from Phytophthora infestans (strain T30-4) (Potato late blight agent).